A 606-amino-acid chain; its full sequence is Adenine deaminase (606 aa).

The protein belongs to the metallo-dependent hydrolases superfamily. Adenine deaminase family. Requires Mn(2+) as cofactor.

The enzyme catalyses adenine + H2O + H(+) = hypoxanthine + NH4(+). The chain is Adenine deaminase from Rubrobacter xylanophilus (strain DSM 9941 / JCM 11954 / NBRC 16129 / PRD-1).